The sequence spans 140 residues: MDNRIPYDDYPVVFLPAYENPPAWIPPHERVYHPDYNNELTQFLPRIVTLKKPPGAQLGFNIRGGKASQLGIFISKVIPDSDAHRAGLQEGDQVLAVNDVDFQDIEHSKAVEILKTAREISMRVRFFPYNYHRQKERTVH.

The PDZ domain occupies 47–129 (IVTLKKPPGA…ISMRVRFFPY (83 aa)).

In terms of assembly, interacts with ATP2B1, ATP2B2, ATP2B3, ATP2B4 and ATP7A. Interacts with PLEKHA7 (via WW domains) at zonula adherens; this interaction is essential for the interaction between PLEKHA7 and the ADAM10-binding protein TSPAN33. Interacts with SLC5A6.

The protein resides in the cytoplasm. The protein localises to the cell junction. It is found in the adherens junction. Its subcellular location is the cell membrane. Its function is as follows. Mediates docking of ADAM10 to zonula adherens by interacting with PLEKHA7 which is required for PLEKHA7 to interact with the ADAM10-binding protein TSPAN33. This chain is PDZ domain-containing protein 11 (Pdzd11), found in Mus musculus (Mouse).